Consider the following 188-residue polypeptide: Large ribosomal subunit protein uL22 (188 aa).

The disordered stretch occupies residues 155 to 188; that stretch reads STPEGAKKGKKKKGTKDAVEKSSKRVKTAATAAH.

This sequence belongs to the universal ribosomal protein uL22 family.

The sequence is that of Large ribosomal subunit protein uL22 (RpL17) from Agriotes lineatus (Lined click beetle).